The chain runs to 407 residues: 5-aminolevulinate synthase 2 (407 aa).

Arg21 and Ser137 together coordinate substrate. Positions 189, 217, and 245 each coordinate pyridoxal 5'-phosphate. Residue Lys248 is part of the active site. Lys248 carries the N6-(pyridoxal phosphate)lysine modification. Residues Thr277 and Thr278 each coordinate pyridoxal 5'-phosphate. Thr363 contacts substrate.

It belongs to the class-II pyridoxal-phosphate-dependent aminotransferase family. In terms of assembly, homodimer. The cofactor is pyridoxal 5'-phosphate.

It carries out the reaction succinyl-CoA + glycine + H(+) = 5-aminolevulinate + CO2 + CoA. Its pathway is porphyrin-containing compound metabolism; protoporphyrin-IX biosynthesis; 5-aminolevulinate from glycine: step 1/1. This is 5-aminolevulinate synthase 2 (hemT) from Cereibacter sphaeroides (strain ATCC 17023 / DSM 158 / JCM 6121 / CCUG 31486 / LMG 2827 / NBRC 12203 / NCIMB 8253 / ATH 2.4.1.) (Rhodobacter sphaeroides).